Reading from the N-terminus, the 610-residue chain is uncharacterized protein (610 aa).

A compositionally biased stretch (polar residues) spans 1 to 28 (MDSPSTSESPLKKNTIQDFGESNMTESP). A disordered region spans residues 1–36 (MDSPSTSESPLKKNTIQDFGESNMTESPQSKEEIDE). The RING-type zinc finger occupies 41–82 (CSVCKNEIIDTTSLSDCCHEFCYDCIVGWLTKGSGPFCPMCK). Disordered stretches follow at residues 390–411 (YRGQ…FRPA) and 431–515 (TSSA…SADR). Positions 432-447 (SSAGAGSARSRGSDSV) are enriched in low complexity. 2 stretches are compositionally biased toward acidic residues: residues 448 to 470 (VEID…EDSD) and 478 to 487 (SEEDSDEEIQ).

This is an uncharacterized protein from Caenorhabditis elegans.